A 70-amino-acid polypeptide reads, in one-letter code: Large ribosomal subunit protein bL28 (70 aa).

The disordered stretch occupies residues 1–26 (MAKRCEVCGKAPRSGNTVSHSDKKSG).

It belongs to the bacterial ribosomal protein bL28 family.

This is Large ribosomal subunit protein bL28 (rpmB) from Thermotoga maritima (strain ATCC 43589 / DSM 3109 / JCM 10099 / NBRC 100826 / MSB8).